A 1065-amino-acid polypeptide reads, in one-letter code: Pumilio domain-containing protein P35G2.14 (1065 aa).

3 disordered regions span residues 1 to 78 (MHQD…SLRS), 130 to 265 (ITSK…PWSP), and 422 to 573 (TTGF…NTNS). The span at 16–44 (RNTISKPSNNNPPLDMSSLNNDFGQQLDS) shows a compositional bias: polar residues. Over residues 59-77 (NPSSNFNDSNRSNISSSLR) the composition is skewed to low complexity. Polar residues-rich tracts occupy residues 134-151 (LQNN…RGRT) and 169-189 (SSVS…HFNP). Low complexity-rich tracts occupy residues 190-224 (SSSS…SEII) and 236-246 (SASNAANSGSN). 2 stretches are compositionally biased toward polar residues: residues 247 to 262 (TIRA…NTLP) and 434 to 455 (GLNT…TFEV). Thr-260 is modified (phosphothreonine). A compositionally biased stretch (low complexity) spans 470–483 (PLGSLSSRPKPSSS). 2 stretches are compositionally biased toward polar residues: residues 495-522 (LKTS…SSSP) and 529-551 (IHNQ…NGLR). 3 positions are modified to phosphoserine: Ser-506, Ser-511, and Ser-515. Thr-554 carries the phosphothreonine modification. Residues 559-573 (NISTRSSSESNNTNS) are compositionally biased toward low complexity. Residues 592–666 (HALWVGNLPS…DPVCISFAKV (75 aa)) form the RRM domain. The region spanning 712-1065 (DLSKIYQILN…ELKKLAEVCA (354 aa)) is the PUM-HD domain. Pumilio repeat units lie at residues 771 to 808 (AINW…MMLE), 809 to 844 (RIAP…RLIA), 846 to 884 (HLQP…AILN), 886 to 917 (FWVI…VLVA), 919 to 954 (AITV…ILLT), and 956 to 993 (RFVQ…LVVD).

The protein localises to the cytoplasm. The polypeptide is Pumilio domain-containing protein P35G2.14 (Schizosaccharomyces pombe (strain 972 / ATCC 24843) (Fission yeast)).